The primary structure comprises 197 residues: uncharacterized protein (197 aa).

A disordered region spans residues 1-31 (MMHFRKKSSISNTSDHDGANRASDVKISEDD). Residues serine 11 and serine 23 each carry the phosphoserine modification. The segment covering 14 to 31 (SDHDGANRASDVKISEDD) has biased composition (basic and acidic residues). Glycyl lysine isopeptide (Lys-Gly) (interchain with G-Cter in ubiquitin) cross-links involve residues lysine 26 and lysine 32. Residues 157–197 (VGGASSQMYGEQAVYQPQQHVQTEEKQKKKKKGLFGRMKKK) form a disordered region. A compositionally biased stretch (polar residues) spans 158 to 177 (GGASSQMYGEQAVYQPQQHV). Residues 184-197 (KKKKKGLFGRMKKK) show a composition bias toward basic residues.

It to yeast YGR273c.

This is an uncharacterized protein from Saccharomyces cerevisiae (strain ATCC 204508 / S288c) (Baker's yeast).